Reading from the N-terminus, the 557-residue chain is DNA 3'-5' helicase XPB (557 aa).

The required for protein stability or solubility stretch occupies residues 1 to 135 (MTDGPLIVQS…APLLGTRIAP (135 aa)). The region spanning 190–344 (VDNFWNGGSG…DVFSLIGPKR (155 aa)) is the Helicase ATP-binding domain. 203-210 (LPCGAGKT) is a binding site for ATP. The DEAH box motif lies at 298 to 301 (DEVH). The region spanning 398-544 (RVVEKLVAQH…AYRIVDADDI (147 aa)) is the Helicase C-terminal domain.

Belongs to the helicase family. RAD25/XPB subfamily. As to quaternary structure, monomer. The cofactor is Mn(2+). Mg(2+) is required as a cofactor. Ca(2+) serves as cofactor.

The catalysed reaction is Couples ATP hydrolysis with the unwinding of duplex DNA by translocating in the 3'-5' direction.. It carries out the reaction ATP + H2O = ADP + phosphate + H(+). ATP-dependent 3'-5' DNA helicase, unwinds 3'-overhangs, 3'- flaps, and splayed-arm DNA substrates but not 5'-overhangs or 5'-flap substrates. Requires ATP hydrolysis for activity; the ATPase activity is DNA-dependent and requires a minimum of 4 single-stranded nucleotides (nt) with 6-10 nt providing all necessary interactions for full processive unwinding. The ATPase prefers ATP over CTP or GTP, is almost inactive with TTP. The chain is DNA 3'-5' helicase XPB from Kineococcus radiotolerans (strain ATCC BAA-149 / DSM 14245 / SRS30216).